Here is a 79-residue protein sequence, read N- to C-terminus: Putative antitoxin MM_2475 (79 aa).

This sequence belongs to the UPF0330 family.

In terms of biological role, possibly the antitoxin component of a type II toxin-antitoxin (TA) system. The sequence is that of Putative antitoxin MM_2475 from Methanosarcina mazei (strain ATCC BAA-159 / DSM 3647 / Goe1 / Go1 / JCM 11833 / OCM 88) (Methanosarcina frisia).